We begin with the raw amino-acid sequence, 167 residues long: Photosystem I assembly protein Ycf3 (167 aa).

TPR repeat units follow at residues 35–68 (AFAY…EVDA), 72–105 (SYIL…NPSL), and 120–153 (GEQA…APTS).

The protein belongs to the Ycf3 family.

The protein localises to the plastid. Its subcellular location is the chloroplast thylakoid membrane. In terms of biological role, essential for the assembly of the photosystem I (PSI) complex. May act as a chaperone-like factor to guide the assembly of the PSI subunits. This Chlorokybus atmophyticus (Soil alga) protein is Photosystem I assembly protein Ycf3.